Reading from the N-terminus, the 1223-residue chain is A disintegrin and metalloproteinase with thrombospondin motifs 14 (1223 aa).

An N-terminal signal peptide occupies residues 1–22; sequence MAPLRALLSYLLPLHCALCAAA. A propeptide spanning residues 23 to 252 is cleaved from the precursor; that stretch reads GSRTPELHLS…QLGDTERKRR (230 aa). A glycan (N-linked (GlcNAc...) asparagine) is linked at Asn109. The Peptidase M12B domain occupies 259-460; that stretch reads YSIEVLLVVD…PSYDCLLDDP (202 aa). 3 cysteine pairs are disulfide-bonded: Cys336–Cys382, Cys376–Cys455, and Cys415–Cys441. Residue His398 coordinates Zn(2+). The active site involves Glu399. Zn(2+) is bound by residues His402 and His408. Residues 461–551 form the Disintegrin domain; it reads FDPAWPQPPE…WKSPEQTYGQ (91 aa). The N-linked (GlcNAc...) asparagine glycan is linked to Asn475. 7 disulfides stabilise this stretch: Cys482–Cys507, Cys493–Cys516, Cys502–Cys535, Cys529–Cys540, Cys564–Cys601, Cys568–Cys606, and Cys579–Cys591. A TSP type-1 1 domain is found at 552 to 607; it reads DGGWSSWTKFGSCSRSCGGGVRSRSRSCNNPSPAYGGRLCLGPMFEYQVCNSEECP. A spacer region spans residues 730-846; sequence LKLVQIPAGA…GSNNVLLEEM (117 aa). TSP type-1 domains lie at 847 to 907, 908 to 967, and 968 to 1022; these read DTYE…HPCS, QPVW…LRVP, and CPAQ…PACG. Residue Asn941 is glycosylated (N-linked (GlcNAc...) asparagine). Cystine bridges form between Cys980–Cys1016, Cys984–Cys1021, and Cys995–Cys1005. Residue Asn1027 is glycosylated (N-linked (GlcNAc...) asparagine). The PLAC domain occupies 1059–1097; it reads STEPCTGDRSVFCQMEVLDRYCSIPGYHRLCCVSCIKKA. Residues 1100-1223 form a disordered region; the sequence is PNPGPDPGPT…TSLPAASPVT (124 aa). Residues 1101–1125 show a composition bias toward pro residues; that stretch reads NPGPDPGPTSLPPFSTPGSPLPGPQ. Over residues 1199 to 1211 the composition is skewed to basic and acidic residues; it reads PEDKGQPGEDLRH.

The precursor is cleaved by a furin endopeptidase. Post-translationally, glycosylated. Can be O-fucosylated by POFUT2 on a serine or a threonine residue found within the consensus sequence C1-X(2)-(S/T)-C2-G of the TSP type-1 repeat domains where C1 and C2 are the first and second cysteine residue of the repeat, respectively. Fucosylated repeats can then be further glycosylated by the addition of a beta-1,3-glucose residue by the glucosyltransferase, B3GALTL. Fucosylation mediates the efficient secretion of ADAMTS family members. Can also be C-glycosylated with one or two mannose molecules on tryptophan residues within the consensus sequence W-X-X-W of the TPRs, and N-glycosylated. These other glycosylations can also facilitate secretion. In terms of tissue distribution, expressed in retina and at low levels in brain, lung and placenta. High expression in fetal tissues.

The protein resides in the secreted. It localises to the extracellular space. Its subcellular location is the extracellular matrix. Its function is as follows. Has aminoprocollagen type I processing activity in the absence of ADAMTS2. Seems to be synthesized as a latent enzyme that requires activation to display aminoprocollagen peptidase activity. Cleaves lysyl oxidase LOX at a site downstream of its propeptide cleavage site to produce a short LOX form. The sequence is that of A disintegrin and metalloproteinase with thrombospondin motifs 14 (ADAMTS14) from Homo sapiens (Human).